The following is a 201-amino-acid chain: Recombination protein RecR (201 aa).

The segment at 57-72 adopts a C4-type zinc-finger fold; that stretch reads CQVCYSLSDNDICDIC. A Toprim domain is found at 80-177; the sequence is NKICIVESYP…RITRITYGIS (98 aa).

The protein belongs to the RecR family.

Its function is as follows. May play a role in DNA repair. It seems to be involved in an RecBC-independent recombinational process of DNA repair. It may act with RecF and RecO. The chain is Recombination protein RecR from Brachyspira hyodysenteriae (strain ATCC 49526 / WA1).